Reading from the N-terminus, the 156-residue chain is Ribosome maturation factor RimP (156 aa).

It belongs to the RimP family.

Its subcellular location is the cytoplasm. Required for maturation of 30S ribosomal subunits. The polypeptide is Ribosome maturation factor RimP (Lachnospira eligens (strain ATCC 27750 / DSM 3376 / VPI C15-48 / C15-B4) (Eubacterium eligens)).